Here is a 49-residue protein sequence, read N- to C-terminus: Fungus-induced-related protein 16 (49 aa).

This Caenorhabditis elegans protein is Fungus-induced-related protein 16 (fipr-16).